The chain runs to 901 residues: Sperm-associated antigen 1 (901 aa).

3 TPR repeats span residues 213–246, 247–279, and 280–313; these read ANRE…LPTA, IAYN…DPGN, and VKAL…EPDN. Positions 322-437 are disordered; that stretch reads EVERDLKNSE…DNPSGLKRRG (116 aa). Phosphoserine is present on residues S351 and S359. TPR repeat units follow at residues 430-464, 472-505, 507-539, 606-639, and 640-673; these read PSGL…EPTG, SILY…HPFS, KPLL…DCGI, FQAL…NSKA, and CAIY…DGEN. Residues 694–776 are disordered; that stretch reads GVDPSQVLLS…AEPAEKLDVS (83 aa). S703 is modified (phosphoserine). The segment covering 708–717 has biased composition (basic and acidic residues); sequence EAARHLDTKN. Phosphoserine is present on residues S739 and S740. Position 756–763 (756–763) interacts with GTP; that stretch reads PARDGVED. S766 is subject to Phosphoserine.

Detected in cerebellum, tongue, esophagus, forestomach, sperm and testis.

Its subcellular location is the cytoplasm. The protein resides in the dynein axonemal particle. In terms of biological role, may play a role in the cytoplasmic assembly of the ciliary dynein arms. May play a role in fertilization. Binds GTP and has GTPase activity. This is Sperm-associated antigen 1 (Spag1) from Mus musculus (Mouse).